Consider the following 374-residue polypeptide: METGCWVLGGEFEDSVFEQKPERQPEPPSSYGAKLCEPQWFYEETESSNDIEVLTLKKFRGDLAYRRQEYEKALQEYSSISKQLPSTNFAMKRDVQEGQARCLAHLGRHEEALEIAVDLESKATNTEHLTSALSLHLAIFSRRQSLEKTILYLQKLISLHPLNPWSWCKLAEAYLSPGPDLPALGESPQGQKSSASSDKAVRASSVHSGTGCLPFPAPSPDSAVFSVEASGCDTQQDMQNCLAARRAAAQTEAQRKACAALIRARLLLQLAQSQQTSFALEKNLRTQQEIAQKVKEFSFREDTLLLMEEAMGEDIVPERIKEELHPEVQCVGPAALTASVAASSKEFEDKWFRKVRDHFSPLEKQSHVDIQIMA.

A disordered region spans residues 182 to 201 (PALGESPQGQKSSASSDKAV). The span at 188-197 (PQGQKSSASS) shows a compositional bias: polar residues.

This is an uncharacterized protein from Rattus norvegicus (Rat).